The chain runs to 180 residues: Shikimate kinase (180 aa).

14 to 19 (GAGKSC) provides a ligand contact to ATP. Serine 18 serves as a coordination point for Mg(2+). Substrate-binding residues include aspartate 36, arginine 60, and glycine 82. Residue arginine 120 coordinates ATP. Arginine 139 is a substrate binding site.

Belongs to the shikimate kinase family. In terms of assembly, monomer. Mg(2+) serves as cofactor.

Its subcellular location is the cytoplasm. It carries out the reaction shikimate + ATP = 3-phosphoshikimate + ADP + H(+). It participates in metabolic intermediate biosynthesis; chorismate biosynthesis; chorismate from D-erythrose 4-phosphate and phosphoenolpyruvate: step 5/7. Functionally, catalyzes the specific phosphorylation of the 3-hydroxyl group of shikimic acid using ATP as a cosubstrate. This chain is Shikimate kinase, found in Xanthomonas axonopodis pv. citri (strain 306).